Consider the following 554-residue polypeptide: (E)-beta-caryophyllene synthase (554 aa).

Asp-313 and Asp-317 together coordinate Mn(2+). Positions 313 to 317 (DDTYD) match the DDXXD motif motif. Homodimerization regions lie at residues 319 to 325 (YGTLDEL) and 391 to 427 (EAQW…LAVI). Asp-457 and Glu-465 together coordinate Mn(2+).

Belongs to the terpene synthase family. As to quaternary structure, homodimer. Mn(2+) serves as cofactor. Requires Mg(2+) as cofactor. In terms of tissue distribution, expressed in peltate glandular trichomes. Present at low levels in flowers, leaves and stems.

It catalyses the reaction (2E,6E)-farnesyl diphosphate = (-)-(E)-beta-caryophyllene + diphosphate. The catalysed reaction is (2E,6E)-farnesyl diphosphate = alpha-humulene + diphosphate. It functions in the pathway secondary metabolite biosynthesis; terpenoid biosynthesis. Its function is as follows. Involved in the biosynthesis of phenolic sesquiterpenes natural products. Sesquiterpene synthase converting (2E,6E)-farnesyl diphosphate (FPP) to (E)-beta-caryophyllene and alpha-humulene. The polypeptide is (E)-beta-caryophyllene synthase (Origanum vulgare (Wild marjoram)).